The primary structure comprises 622 residues: Chaperone protein HscA homolog (622 aa).

The protein belongs to the heat shock protein 70 family.

Functionally, chaperone involved in the maturation of iron-sulfur cluster-containing proteins. Has a low intrinsic ATPase activity which is markedly stimulated by HscB. In Burkholderia pseudomallei (strain 1710b), this protein is Chaperone protein HscA homolog.